The chain runs to 54 residues: U7-myrmicitoxin-Tb1a (54 aa).

The signal sequence occupies residues 1–26 (MQLSHLLLAFAMIFVMTIIHTPQVQA). A propeptide spanning residues 27–36 (DAMADADADA) is cleaved from the precursor. The cysteines at positions 40 and 49 are disulfide-linked.

Expressed by the venom gland.

Its subcellular location is the secreted. Its function is as follows. Venom protein with unknown function. Does not induce paralysis when a high dose is administered by intrathoracic injection into the blowfly Lucilia caesar. In Tetramorium bicarinatum (Tramp ant), this protein is U7-myrmicitoxin-Tb1a.